A 157-amino-acid chain; its full sequence is Small ribosomal subunit protein uS7 (157 aa).

This sequence belongs to the universal ribosomal protein uS7 family. In terms of assembly, part of the 30S ribosomal subunit. Contacts proteins S9 and S11.

Functionally, one of the primary rRNA binding proteins, it binds directly to 16S rRNA where it nucleates assembly of the head domain of the 30S subunit. Is located at the subunit interface close to the decoding center, probably blocks exit of the E-site tRNA. This Leptospira borgpetersenii serovar Hardjo-bovis (strain JB197) protein is Small ribosomal subunit protein uS7.